The sequence spans 101 residues: Small ribosomal subunit protein uS14 (101 aa).

The protein belongs to the universal ribosomal protein uS14 family. As to quaternary structure, part of the 30S ribosomal subunit. Contacts proteins S3 and S10.

Binds 16S rRNA, required for the assembly of 30S particles and may also be responsible for determining the conformation of the 16S rRNA at the A site. In Shewanella woodyi (strain ATCC 51908 / MS32), this protein is Small ribosomal subunit protein uS14.